We begin with the raw amino-acid sequence, 585 residues long: 4-hydroxy-3-methylbut-2-en-1-yl diphosphate synthase (flavodoxin) (585 aa).

Residues C492, C495, C526, and E533 each contribute to the [4Fe-4S] cluster site.

Belongs to the IspG family. It depends on [4Fe-4S] cluster as a cofactor.

The catalysed reaction is (2E)-4-hydroxy-3-methylbut-2-enyl diphosphate + oxidized [flavodoxin] + H2O + 2 H(+) = 2-C-methyl-D-erythritol 2,4-cyclic diphosphate + reduced [flavodoxin]. It participates in isoprenoid biosynthesis; isopentenyl diphosphate biosynthesis via DXP pathway; isopentenyl diphosphate from 1-deoxy-D-xylulose 5-phosphate: step 5/6. Converts 2C-methyl-D-erythritol 2,4-cyclodiphosphate (ME-2,4cPP) into 1-hydroxy-2-methyl-2-(E)-butenyl 4-diphosphate. The sequence is that of 4-hydroxy-3-methylbut-2-en-1-yl diphosphate synthase (flavodoxin) from Akkermansia muciniphila (strain ATCC BAA-835 / DSM 22959 / JCM 33894 / BCRC 81048 / CCUG 64013 / CIP 107961 / Muc).